The sequence spans 240 residues: Fatty acid metabolism regulator protein (240 aa).

The HTH gntR-type domain occupies 6–74 (KGPASFAEKY…HGKPTRVNNF (69 aa)). Residues 34-53 (ERELSELIGVTRTTLREVLQ) constitute a DNA-binding region (H-T-H motif).

In terms of assembly, homodimer.

The protein resides in the cytoplasm. Functionally, multifunctional regulator of fatty acid metabolism. The chain is Fatty acid metabolism regulator protein from Shewanella oneidensis (strain ATCC 700550 / JCM 31522 / CIP 106686 / LMG 19005 / NCIMB 14063 / MR-1).